Consider the following 287-residue polypeptide: Rhomboid-like protein 18 (287 aa).

A run of 6 helical transmembrane segments spans residues 10-30 (NAPV…FFGI), 53-73 (LIIS…LYLL), 90-110 (VFIF…LSLT), 117-137 (LLTS…FLDI), 145-165 (VLGV…QLLL), and 172-192 (IFTG…IFGI). The UBA domain maps to 244 to 284 (EPSEEAIATLVSMGFDQNAARQALVHARNDVNAATNILLEA).

Belongs to the peptidase S54 family.

The protein resides in the membrane. In terms of biological role, probable rhomboid-type serine protease that catalyzes intramembrane proteolysis. This chain is Rhomboid-like protein 18, found in Arabidopsis thaliana (Mouse-ear cress).